Reading from the N-terminus, the 655-residue chain is Probable alpha-galactosidase D (655 aa).

A signal peptide spans 1-16 (MLPKIFYLSLLPAALG). N-linked (GlcNAc...) asparagine glycans are attached at residues asparagine 47 and asparagine 91. The cysteines at positions 124 and 155 are disulfide-linked. Aspartate 153 (nucleophile) is an active-site residue. Asparagine 180 and asparagine 189 each carry an N-linked (GlcNAc...) asparagine glycan. 198 to 202 (EWGID) serves as a coordination point for substrate. The Proton donor role is filled by aspartate 220. N-linked (GlcNAc...) asparagine glycans are attached at residues asparagine 349, asparagine 436, asparagine 458, asparagine 503, asparagine 537, asparagine 541, and asparagine 580.

The protein belongs to the glycosyl hydrolase 27 family.

Its subcellular location is the secreted. It carries out the reaction Hydrolysis of terminal, non-reducing alpha-D-galactose residues in alpha-D-galactosides, including galactose oligosaccharides, galactomannans and galactolipids.. Functionally, hydrolyzes a variety of simple alpha-D-galactoside as well as more complex molecules such as oligosaccharides and polysaccharides. This is Probable alpha-galactosidase D (aglD) from Aspergillus flavus (strain ATCC 200026 / FGSC A1120 / IAM 13836 / NRRL 3357 / JCM 12722 / SRRC 167).